A 90-amino-acid chain; its full sequence is Interferon alpha-inducible protein 27-like protein 2A (90 aa).

Positions 1–24 are cleaved as a signal peptide; it reads MLGTLFGSAIGGALAVAGAPVALA. A run of 2 helical transmembrane segments spans residues 28–48 and 67–89; these read FTGT…AAAI and GVLG…VGAL.

Belongs to the IFI6/IFI27 family. As to quaternary structure, homodimer. Interacts with SKP2. Interacts with NR4A1. May interact with BCL2.

It is found in the nucleus inner membrane. Functionally, may be involved in the interferon-induced negative regulation of the transcriptional activity of NR4A1, NR4A2 and NR4A3 through the enhancement of XPO1-mediated nuclear export of these nuclear receptors. Through the regulation of NR4A1 transcriptional activity, may play a role in the vascular response to injury. The protein is Interferon alpha-inducible protein 27-like protein 2A of Mus musculus (Mouse).